The primary structure comprises 504 residues: MSEKQMKEAFVSNLNGTTVLEITQGLCFPAFCILCRGFLIIFSQYLCSFSPTWKTRFLTDFVVLIVPMVATLTIWASFILLELLGVIIFGAGLLYQIYRRRTCYARLPFLKILEKFLNISLESEYNPAISCFRVITSAFTAIAILAVDFPLFPRRFAKTELYGTGAMDFGVGGFVFGSAMVCLEVRRRKYMEGSKLHYFTNSLYSVWPLVFLGIGRLAIIKSIGYQEHLTEYGVHWNFFFTIIVVKLITPLLLIIFPLNKSWIIALGITVLYQLALDFTSLKRLILYGTDGSGTRVGLLNANREGIISTLGYVAIHMAGVQTGLYMHKNRSHIKDLIKVACFLLLAAISLFISLYVVQVNVEAVSRRMANLAFCIWIVASSLILLSSLLLGDIILSFAKFLIKGALVPCSWKLIQSPVTNKKHSESLVPEAERMEPSLCLITALNRKQLIFFLLSNITTGLINLMVDTLHSSTLWALFVVNLYMFSNCLIVYVLYLQDKTVQFW.

At 1–21 the chain is on the lumenal side; the sequence is MSEKQMKEAFVSNLNGTTVLE. The N-linked (GlcNAc...) asparagine glycan is linked to asparagine 15. Residues 22–42 form a helical membrane-spanning segment; that stretch reads ITQGLCFPAFCILCRGFLIIF. The Cytoplasmic segment spans residues 43–56; sequence SQYLCSFSPTWKTR. A helical transmembrane segment spans residues 57 to 75; sequence FLTDFVVLIVPMVATLTIW. Residues 76–81 lie on the Lumenal side of the membrane; sequence ASFILL. Residues 82-98 form a helical membrane-spanning segment; sequence ELLGVIIFGAGLLYQIY. The Cytoplasmic portion of the chain corresponds to 99–131; that stretch reads RRRTCYARLPFLKILEKFLNISLESEYNPAISC. Residues 132-152 traverse the membrane as a helical segment; it reads FRVITSAFTAIAILAVDFPLF. Over 153 to 162 the chain is Lumenal; it reads PRRFAKTELY. Residues 163-183 form a helical membrane-spanning segment; the sequence is GTGAMDFGVGGFVFGSAMVCL. The Cytoplasmic portion of the chain corresponds to 184 to 202; that stretch reads EVRRRKYMEGSKLHYFTNS. Residues 203 to 223 traverse the membrane as a helical segment; that stretch reads LYSVWPLVFLGIGRLAIIKSI. The Lumenal portion of the chain corresponds to 224-237; that stretch reads GYQEHLTEYGVHWN. A helical transmembrane segment spans residues 238 to 258; sequence FFFTIIVVKLITPLLLIIFPL. The Cytoplasmic portion of the chain corresponds to 259–260; it reads NK. A helical membrane pass occupies residues 261–281; it reads SWIIALGITVLYQLALDFTSL. The Lumenal portion of the chain corresponds to 282-305; sequence KRLILYGTDGSGTRVGLLNANREG. A helical transmembrane segment spans residues 306–326; that stretch reads IISTLGYVAIHMAGVQTGLYM. The Cytoplasmic segment spans residues 327–338; sequence HKNRSHIKDLIK. The helical transmembrane segment at 339 to 359 threads the bilayer; it reads VACFLLLAAISLFISLYVVQV. The Lumenal portion of the chain corresponds to 360 to 370; it reads NVEAVSRRMAN. The helical transmembrane segment at 371 to 391 threads the bilayer; that stretch reads LAFCIWIVASSLILLSSLLLG. Topologically, residues 392 to 448 are cytoplasmic; the sequence is DIILSFAKFLIKGALVPCSWKLIQSPVTNKKHSESLVPEAERMEPSLCLITALNRKQ. Residue serine 416 is modified to Phosphoserine. A helical transmembrane segment spans residues 449 to 469; the sequence is LIFFLLSNITTGLINLMVDTL. The Lumenal portion of the chain corresponds to 470 to 473; that stretch reads HSST. A helical membrane pass occupies residues 474 to 494; that stretch reads LWALFVVNLYMFSNCLIVYVL. At 495–504 the chain is on the cytoplasmic side; that stretch reads YLQDKTVQFW.

Belongs to the PIGW family.

It localises to the endoplasmic reticulum membrane. Its pathway is glycolipid biosynthesis; glycosylphosphatidylinositol-anchor biosynthesis. Functionally, acyltransferase that catalyzes the acyl transfer from an acyl-CoA at the 2-OH position of the inositol ring of glucosaminyl phosphatidylinositol (GlcN-PI) to generate glucosaminyl acyl phosphatidylinositol (GlcN-(acyl)PI) and participates in the fourth step of GPI-anchor biosynthesis. Required for the transport of GPI-anchored proteins to the plasma membrane. Acetylation during GPI-anchor biosynthesis is not essential for the subsequent mannosylation and is usually removed soon after the attachment of GPIs to proteins. This chain is Glucosaminyl-phosphatidylinositol-acyltransferase PIGW, found in Homo sapiens (Human).